Reading from the N-terminus, the 222-residue chain is Phosphoglycolate phosphatase (222 aa).

Asp-12 (nucleophile) is an active-site residue. The Mg(2+) site is built by Asp-12, Asp-14, and Asp-175.

Belongs to the HAD-like hydrolase superfamily. CbbY/CbbZ/Gph/YieH family. Mg(2+) is required as a cofactor.

The enzyme catalyses 2-phosphoglycolate + H2O = glycolate + phosphate. Its pathway is organic acid metabolism; glycolate biosynthesis; glycolate from 2-phosphoglycolate: step 1/1. In terms of biological role, specifically catalyzes the dephosphorylation of 2-phosphoglycolate. Is involved in the dissimilation of the intracellular 2-phosphoglycolate formed during the DNA repair of 3'-phosphoglycolate ends, a major class of DNA lesions induced by oxidative stress. In Chromobacterium violaceum (strain ATCC 12472 / DSM 30191 / JCM 1249 / CCUG 213 / NBRC 12614 / NCIMB 9131 / NCTC 9757 / MK), this protein is Phosphoglycolate phosphatase.